The primary structure comprises 147 residues: MQLHELKPAPGSRQKPTRKGQGIGSGLGKTAGRGHKGQKARSGGGVRPGFEGGQQPLQRRLPKRGFTNARFKKEFAIINVGDLDVFEAGTVVTPELLLERKMIKKLKDGVKLLADGNIEKALTVKLHGVSEAAAEKIKAAGGQVEVM.

The interval 1-65 (MQLHELKPAP…PLQRRLPKRG (65 aa)) is disordered. Composition is skewed to gly residues over residues 21–31 (QGIGSGLGKTA) and 42–52 (SGGGVRPGFEG).

It belongs to the universal ribosomal protein uL15 family. In terms of assembly, part of the 50S ribosomal subunit.

In terms of biological role, binds to the 23S rRNA. The protein is Large ribosomal subunit protein uL15 of Heliobacterium modesticaldum (strain ATCC 51547 / Ice1).